The primary structure comprises 374 residues: MALKTWKPFITVVSLQFGYAGLSIIAKFALNQGMSPHVLASYRHIVATIFIAPFAYFLDRKIRPKMTLSIFFKILLLGLLEPTIDQNLYYTGMKYTSATFTAAMTNVLPAFAFIMAWIFRLEKVNVKKIHSQAKILGTIVTVGGAMLMTVVKGPLIPLPWANPHDIHQDSSNTGVKQDLTKGASLIAIGCICWAGFINLQAITLKSYPVELSLTAYICFLGSIESTIVALFIERGNPSAWAIHLDSKLLAAVYGGVICSGIGYYVQGVIMKTRGPVFVTAFNPLSMVIVAILGSIILAEVMFLGRILGAIVIVLGLYSVLWGKSKDEPSSSFSDMDKELPLSTPQIVLPSKANAKMDTNDASVVISRPNTNESV.

10 helical membrane-spanning segments follow: residues 9-29, 38-58, 64-84, 99-119, 135-155, 182-202, 212-232, 249-269, 284-304, and 306-326; these read FITVVSLQFGYAGLSIIAKFA, VLASYRHIVATIFIAPFAYFL, PKMTLSIFFKILLLGLLEPTI, TFTAAMTNVLPAFAFIMAWIF, ILGTIVTVGGAMLMTVVKGPL, GASLIAIGCICWAGFINLQAI, SLTAYICFLGSIESTIVALFI, LAAVYGGVICSGIGYYVQGVI, LSMVIVAILGSIILAEVMFLG, and ILGAIVIVLGLYSVLWGKSKD. 2 EamA domains span residues 19–147 and 191–320; these read YAGL…GAML and ICWA…YSVL. The tract at residues 350-374 is disordered; sequence SKANAKMDTNDASVVISRPNTNESV.

This sequence belongs to the drug/metabolite transporter (DMT) superfamily. Plant drug/metabolite exporter (P-DME) (TC 2.A.7.4) family.

Its subcellular location is the membrane. This Arabidopsis thaliana (Mouse-ear cress) protein is WAT1-related protein At2g39510.